We begin with the raw amino-acid sequence, 162 residues long: MMAKFPITDQGFEKLEHELKHLKHVERKKVSEDIAEARAHGDLSENAEYEAAREKQAFVEARIKHLEDITARAEIINVAKLSGDSIKFGATVVLIDDETEEEVMYHIVGEYEADITKKRVSIASPIAKALIGKSVGDIVEVMTPGGVKSYEVVTIKYEELVF.

Residues 44–69 (SENAEYEAAREKQAFVEARIKHLEDI) adopt a coiled-coil conformation.

Belongs to the GreA/GreB family.

Its function is as follows. Necessary for efficient RNA polymerase transcription elongation past template-encoded arresting sites. The arresting sites in DNA have the property of trapping a certain fraction of elongating RNA polymerases that pass through, resulting in locked ternary complexes. Cleavage of the nascent transcript by cleavage factors such as GreA or GreB allows the resumption of elongation from the new 3'terminus. GreA releases sequences of 2 to 3 nucleotides. The polypeptide is Transcription elongation factor GreA (Rickettsia bellii (strain RML369-C)).